The following is a 310-amino-acid chain: L-lactate dehydrogenase (310 aa).

NAD(+) is bound by residues 10–11, aspartate 32, tyrosine 62, and 76–77; these read MV and GV. Residues glutamine 79, arginine 85, and 117–120 contribute to the substrate site; that span reads NPVD. Residues 115-117 and serine 140 each bind NAD(+); that span reads ATN. Residue 145–148 coordinates substrate; it reads DTAR. Beta-D-fructose 1,6-bisphosphate contacts are provided by arginine 150 and histidine 165. The active-site Proton acceptor is histidine 172. Residue tyrosine 218 is modified to Phosphotyrosine. Threonine 227 serves as a coordination point for substrate.

This sequence belongs to the LDH/MDH superfamily. LDH family. In terms of assembly, homotetramer.

The protein resides in the cytoplasm. The enzyme catalyses (S)-lactate + NAD(+) = pyruvate + NADH + H(+). It participates in fermentation; pyruvate fermentation to lactate; (S)-lactate from pyruvate: step 1/1. Allosterically activated by fructose 1,6-bisphosphate (FBP). Its function is as follows. Catalyzes the conversion of lactate to pyruvate. The sequence is that of L-lactate dehydrogenase from Thermus thermophilus (strain ATCC 27634 / DSM 579 / HB8).